The following is a 115-amino-acid chain: Tyrosine-protein phosphatase 24 (115 aa).

The region spanning 1–115 is the Tyrosine-protein phosphatase domain; it reads WMMIVEQKCR…ETGSDAPMVV (115 aa). Substrate is bound at residue Asp83.

The protein belongs to the protein-tyrosine phosphatase family.

It catalyses the reaction O-phospho-L-tyrosyl-[protein] + H2O = L-tyrosyl-[protein] + phosphate. The polypeptide is Tyrosine-protein phosphatase 24 (STY-24) (Styela plicata (Wrinkled sea squirt)).